Consider the following 311-residue polypeptide: Probable manganese-dependent inorganic pyrophosphatase (311 aa).

Positions 9, 13, 15, 77, 99, and 151 each coordinate Mn(2+).

It belongs to the PPase class C family. Requires Mn(2+) as cofactor.

The protein resides in the cytoplasm. It carries out the reaction diphosphate + H2O = 2 phosphate + H(+). This is Probable manganese-dependent inorganic pyrophosphatase from Streptococcus pyogenes serotype M1.